A 175-amino-acid polypeptide reads, in one-letter code: Nascent polypeptide-associated complex subunit beta (175 aa).

2 disordered regions span residues 1–36 (MDKEKLAKLQSQVRIGGKGTPRRKVVKKSVTSSQGD) and 129–175 (RQAA…EELE). The NAC-A/B domain occupies 34-101 (QGDDRKLQAA…GQTKELTELV (68 aa)). Residues 149-163 (EGDDEIPDLVDNFDE) show a composition bias toward acidic residues. Positions 164–175 (AEVKKSDLEELE) are enriched in basic and acidic residues.

It belongs to the NAC-beta family. In terms of assembly, part of the nascent polypeptide-associated complex (NAC), consisting of EGD2 and EGD1. NAC associates with ribosomes via EGD1.

The protein localises to the cytoplasm. The protein resides in the nucleus. Component of the nascent polypeptide-associated complex (NAC), a dynamic component of the ribosomal exit tunnel, protecting the emerging polypeptides from interaction with other cytoplasmic proteins to ensure appropriate nascent protein targeting. The NAC complex also promotes mitochondrial protein import by enhancing productive ribosome interactions with the outer mitochondrial membrane and blocks the inappropriate interaction of ribosomes translating non-secretory nascent polypeptides with translocation sites in the membrane of the endoplasmic reticulum. EGD1 may act as a transcription factor that exert a negative effect on the expression of several genes that are transcribed by RNA polymerase II. The protein is Nascent polypeptide-associated complex subunit beta (EGD1) of Cryptococcus neoformans var. neoformans serotype D (strain B-3501A) (Filobasidiella neoformans).